A 234-amino-acid chain; its full sequence is Proteasome subunit alpha type-2 (234 aa).

Alanine 2 carries the N-acetylalanine modification. Tyrosine 121 carries the post-translational modification Phosphotyrosine.

The protein belongs to the peptidase T1A family. As to quaternary structure, the 26S proteasome consists of a 20S proteasome core and two 19S regulatory subunits. The 20S proteasome core is a barrel-shaped complex made of 28 subunits that are arranged in four stacked rings. The two outer rings are each formed by seven alpha subunits, and the two inner rings are formed by seven beta subunits. The proteolytic activity is exerted by three beta-subunits PSMB5, PSMB6 and PSMB7.

The protein localises to the cytoplasm. It localises to the nucleus. In terms of biological role, component of the 20S core proteasome complex involved in the proteolytic degradation of most intracellular proteins. This complex plays numerous essential roles within the cell by associating with different regulatory particles. Associated with two 19S regulatory particles, forms the 26S proteasome and thus participates in the ATP-dependent degradation of ubiquitinated proteins. The 26S proteasome plays a key role in the maintenance of protein homeostasis by removing misfolded or damaged proteins that could impair cellular functions, and by removing proteins whose functions are no longer required. Associated with the PA200 or PA28, the 20S proteasome mediates ubiquitin-independent protein degradation. This type of proteolysis is required in several pathways including spermatogenesis (20S-PA200 complex) or generation of a subset of MHC class I-presented antigenic peptides (20S-PA28 complex). The polypeptide is Proteasome subunit alpha type-2 (psma2) (Xenopus laevis (African clawed frog)).